The chain runs to 270 residues: Shikimate dehydrogenase (NADP(+)) (270 aa).

Residues 14–16 (SKS) and T60 each bind shikimate. The active-site Proton acceptor is K64. E76 contributes to the NADP(+) binding site. Shikimate-binding residues include N85 and D101. NADP(+)-binding positions include 125–129 (GAGGA), 149–154 (NRTASR), and M213. Y215 serves as a coordination point for shikimate. Position 236 (G236) interacts with NADP(+).

The protein belongs to the shikimate dehydrogenase family. In terms of assembly, homodimer.

It catalyses the reaction shikimate + NADP(+) = 3-dehydroshikimate + NADPH + H(+). It participates in metabolic intermediate biosynthesis; chorismate biosynthesis; chorismate from D-erythrose 4-phosphate and phosphoenolpyruvate: step 4/7. Involved in the biosynthesis of the chorismate, which leads to the biosynthesis of aromatic amino acids. Catalyzes the reversible NADPH linked reduction of 3-dehydroshikimate (DHSA) to yield shikimate (SA). This is Shikimate dehydrogenase (NADP(+)) from Stutzerimonas stutzeri (strain A1501) (Pseudomonas stutzeri).